The chain runs to 261 residues: 1-(5-phosphoribosyl)-5-[(5-phosphoribosylamino)methylideneamino] imidazole-4-carboxamide isomerase (261 aa).

This sequence belongs to the HisA/HisF family.

It is found in the cytoplasm. The enzyme catalyses 1-(5-phospho-beta-D-ribosyl)-5-[(5-phospho-beta-D-ribosylamino)methylideneamino]imidazole-4-carboxamide = 5-[(5-phospho-1-deoxy-D-ribulos-1-ylimino)methylamino]-1-(5-phospho-beta-D-ribosyl)imidazole-4-carboxamide. It participates in amino-acid biosynthesis; L-histidine biosynthesis; L-histidine from 5-phospho-alpha-D-ribose 1-diphosphate: step 4/9. Functionally, catalyzes the isomerization of the aminoaldose moiety of ProFAR to the aminoketose of PRFAR. This is 1-(5-phosphoribosyl)-5-[(5-phosphoribosylamino)methylideneamino] imidazole-4-carboxamide isomerase from Saccharomyces cerevisiae (strain ATCC 204508 / S288c) (Baker's yeast).